The primary structure comprises 994 residues: NACHT, LRR and PYD domains-containing protein 4 (994 aa).

The 94-residue stretch at 1–94 (MAASFFSDFG…CMKVMRERTG (94 aa)) folds into the Pyrin domain. An NACHT domain is found at 149–472 (RTVIIQGPQG…FYLLKSHLDH (324 aa)). Position 155 to 162 (155 to 162 (GPQGIGKT)) interacts with ATP. 8 LRR repeats span residues 637–660 (SGHL…TWCN), 698–721 (YLSF…LNYP), 722–745 (AGNV…VLAG), 750–777 (NKKL…LCSP), 806–833 (NKSV…ALKH), 863–886 (NQNL…LLCR), 920–943 (SKTL…VLCE), and 949–972 (ECAL…LLTA).

This sequence belongs to the NLRP family. In terms of assembly, interacts with CHUK/IKKA, inhibiting its kinase activity.

Functionally, may be involved in inflammation and recognition of cytosolic pathogen-associated molecular patterns (PAMPs) not intercepted by membrane-bound receptors. Acts as a negative regulator of the type I interferon signaling pathway by serving as an adapter to promote DTX4-mediated ubiquitination of activated TBK1, and its subsequent degradation. Suppresses NF-kappaB induction by the cytokines TNFA and IL1B, suggesting that it operates at a point of convergence in these two cytokine signaling pathways. The chain is NACHT, LRR and PYD domains-containing protein 4 from Homo sapiens (Human).